The chain runs to 105 residues: Small ribosomal subunit protein uS10 (105 aa).

The protein belongs to the universal ribosomal protein uS10 family. As to quaternary structure, part of the 30S ribosomal subunit.

Its function is as follows. Involved in the binding of tRNA to the ribosomes. This is Small ribosomal subunit protein uS10 from Rickettsia typhi (strain ATCC VR-144 / Wilmington).